Here is a 321-residue protein sequence, read N- to C-terminus: DNA-directed RNA polymerase subunit alpha (321 aa).

Positions 1-235 are alpha N-terminal domain (alpha-NTD); the sequence is MAYQIECLET…DLFSPLKEVP (235 aa). An alpha C-terminal domain (alpha-CTD) region spans residues 252-321; sequence QIPIEQLNLS…TLPPQKAARN (70 aa).

The protein belongs to the RNA polymerase alpha chain family. Homodimer. In cyanobacteria the RNAP catalytic core is composed of 2 alpha, 1 beta, 1 beta', 1 gamma and 1 omega subunit. When a sigma factor is associated with the core the holoenzyme is formed, which can initiate transcription.

It carries out the reaction RNA(n) + a ribonucleoside 5'-triphosphate = RNA(n+1) + diphosphate. Functionally, DNA-dependent RNA polymerase catalyzes the transcription of DNA into RNA using the four ribonucleoside triphosphates as substrates. This is DNA-directed RNA polymerase subunit alpha from Thermosynechococcus vestitus (strain NIES-2133 / IAM M-273 / BP-1).